The following is a 486-amino-acid chain: BTB/POZ domain and ankyrin repeat-containing protein BOP (486 aa).

The 91-residue stretch at 25–115 folds into the BTB domain; that stretch reads SDVTFSVEGR…LYSGQVSIVP (91 aa). The C2HC NPR-type zinc-finger motif lies at 121–135; the sequence is RPNCGERGCWHTHCS. Zn(2+) is bound by residues C124, C129, H131, and C134. ANK repeat units follow at residues 257–286, 287–316, 321–350, and 354–388; these read QKIRRMRRALDSSDVELVKLMVMGEGLNLD, EALALHYAVENCSREVAKALLELGAADVNY, AGKTPLHIAAEMVSPDMVAVLLDHHADPNV, and DNVTPLDILRTLTSDFLFKGAIPGLTHIEPNKLRL. Disordered regions lie at residues 403–442 and 464–486; these read EEGNANNNPPSSTTTTLPMYHHPMNDDHNSSSSSGNNHNI and QMSDDHGGRHGDPAMYHHSHHDY. Composition is skewed to low complexity over residues 406-418 and 432-442; these read NANNNPPSSTTTT and SSSSSGNNHNI. Positions 466–475 are enriched in basic and acidic residues; that stretch reads SDDHGGRHGD.

This sequence belongs to the plant 'ANKYRIN-BTB/POZ' family. 'NOOT-BOP-COCH-like' (NBCL) subfamily. In terms of assembly, homodimer. As to expression, expressed in xylem vessels and parenchyma cells of pedicel vascular tissue in the abscission zone (AZ). Accumulates in developing root nodules and present in roots, especially in the upper part.

Its subcellular location is the nucleus. It localises to the cytoplasm. The protein resides in the cell membrane. It functions in the pathway protein modification; protein ubiquitination. In terms of biological role, may act as a substrate-specific adapter of an E3 ubiquitin-protein ligase complex (CUL3-RBX1-BTB) which mediates the ubiquitination and subsequent proteasomal degradation of target proteins. Transcriptional co-regulator involved in promoting the fate and determination of leaf and flower meristems. Required for the abscission of senescent organs, probably by regulating the cell wall disorganization in abscission zones (AZs, e.g. pulvini at the base of leaves). Involved in the coordination of the symbiotic nodule developmental program; promotes the formation of root nodules by interacting directly with APP1 to modulate the expression of the nuclear transcription factor Y subunit (NF-YA1), a key nodulin. Necessary for the robust maintenance of nodule identity throughout the nodule developmental program. This Lupinus luteus (European yellow lupine) protein is BTB/POZ domain and ankyrin repeat-containing protein BOP.